The primary structure comprises 468 residues: Envelope glycoprotein C (468 aa).

The signal sequence occupies residues 1–30 (MWLPNLVRFVAVAYLICAGAILTYASGASA). The span at 31–50 (SSSQSTPATPTHTTPNLTTA) shows a compositional bias: low complexity. A disordered region spans residues 31–73 (SSSQSTPATPTHTTPNLTTAHGAGSDNTTNANGTESTHSHETT). The Virion surface portion of the chain corresponds to 31 to 431 (SSSQSTPATP…IVEDRPVLTS (401 aa)). 9 N-linked (GlcNAc...) asparagine; by host glycosylation sites follow: Asn-46, Asn-57, Asn-62, Asn-92, Asn-100, Asn-131, Asn-203, Asn-208, and Asn-269. A disulfide bridge links Cys-76 with Cys-93. Ig-like domains follow at residues 220–311 (PLLD…DEVS) and 321–416 (PSVF…DTVV). Cystine bridges form between Cys-239-Cys-301, Cys-340-Cys-399, and Cys-344-Cys-373. Residues 432–451 (IIAVTCGAAALALVVLITAV) form a helical membrane-spanning segment. The Cytoplasmic segment spans residues 452-468 (CFYCSKPSQAPYKKSDF).

The protein belongs to the herpesviridae glycoprotein C family. In terms of assembly, interacts with host complement component C3; this interaction inhibits host immune response by disregulating complement cascade.

It localises to the virion membrane. In terms of biological role, essential for the initial attachment to heparan sulfate moieties of the host cell surface proteoglycans. Also plays a role in host immune evasion by inhibiting the host complement cascade activation. This chain is Envelope glycoprotein C (gC), found in Equus caballus (Horse).